The primary structure comprises 136 residues: Protein NrdI (136 aa).

This sequence belongs to the NrdI family.

Its function is as follows. Probably involved in ribonucleotide reductase function. This is Protein NrdI from Escherichia coli O7:K1 (strain IAI39 / ExPEC).